The chain runs to 437 residues: MAAGTLYTYPENWRAFKALIAAQYSGAQVRVLSAPPHFHFGQTNRTPEFLRKFPAGKVPAFEGDDGFCVFESNAIAYYVSNEELRGSTPEAAAQVVQWVSFADSDIVPPASTWVFPTLGIMHHNKQATENAKEEVRRILGLLDAYLKTRTFLVGERVTLADITVVCTLLWLYKQVLEPSFRQAFPNTNRWFLTCINQPQFRAVLGEVKLCEKMAQFDAKKFAETQPKKDTPRKEKGSREEKQKPQAERKEEKKAAAPAPEEEMDECEQALAAEPKAKDPFAHLPKSTFVLDEFKRKYSNEDTLSVALPYFWEHFDKDGWSLWYSEYRFPEELTQTFMSCNLITGMFQRLDKLRKNAFASVILFGTNNSSSISGVWVFRGQELAFPLSPDWQVDYESYTWRKLDPGSEETQTLVREYFSWEGAFQHVGKAFNQGKIFK.

Position 2 is an N-acetylalanine (Ala2). The 86-residue stretch at Ala2–Ser87 folds into the GST N-terminal domain. In terms of domain architecture, GST C-terminal spans Thr88 to Phe216. Lys147 and Lys212 each carry N6-acetyllysine. Over residues Phe221 to Ala254 the composition is skewed to basic and acidic residues. The segment at Phe221 to Gln268 is disordered. Residue Lys253 forms a Glycyl lysine isopeptide (Lys-Gly) (interchain with G-Cter in SUMO1) linkage. An EF-1-gamma C-terminal domain is found at Ala276 to Lys437. Lys285 participates in a covalent cross-link: Glycyl lysine isopeptide (Lys-Gly) (interchain with G-Cter in SUMO2). N6-acetyllysine is present on Lys401. The residue at position 434 (Lys434) is an N6-acetyllysine; alternate. The residue at position 434 (Lys434) is an N6-malonyllysine; alternate.

As to quaternary structure, EF-1 is composed of four subunits: alpha, beta, delta, and gamma. In terms of tissue distribution, highly expressed in pancreatic tumor tissue and to a lesser extent in normal kidney, intestine, pancreas, stomach, lung, brain, spleen and liver.

In terms of biological role, probably plays a role in anchoring the complex to other cellular components. This is Elongation factor 1-gamma (EEF1G) from Homo sapiens (Human).